The following is a 376-amino-acid chain: TATA box-binding protein-like 2 (376 aa).

The interval 103-184 (PDEVTQENKD…SDSLSLASIT (82 aa)) is disordered. A compositionally biased stretch (basic and acidic residues) spans 108 to 122 (QENKDQPVISKHETE). A compositionally biased stretch (low complexity) spans 126–159 (ESQSPQSRLPSPSEQDVGLGLNSSSLSNSHSQLH). Over residues 175-184 (SDSLSLASIT) the composition is skewed to polar residues.

It belongs to the TBP family. As to quaternary structure, interacts with TAF3.

The protein resides in the cytoplasm. It localises to the nucleus. Functionally, transcription factor required in complex with TAF3 for the differentiation of myoblasts into myocytes. The complex replaces TFIID at specific promoters at an early stage in the differentiation process. The sequence is that of TATA box-binding protein-like 2 from Pan troglodytes (Chimpanzee).